Here is a 408-residue protein sequence, read N- to C-terminus: Arginine biosynthesis bifunctional protein ArgJ (408 aa).

Substrate contacts are provided by Thr-158, Lys-184, Thr-195, Glu-281, Asn-403, and Thr-408. Thr-195 (nucleophile) is an active-site residue.

It belongs to the ArgJ family. In terms of assembly, heterotetramer of two alpha and two beta chains.

Its subcellular location is the cytoplasm. The enzyme catalyses N(2)-acetyl-L-ornithine + L-glutamate = N-acetyl-L-glutamate + L-ornithine. It carries out the reaction L-glutamate + acetyl-CoA = N-acetyl-L-glutamate + CoA + H(+). It participates in amino-acid biosynthesis; L-arginine biosynthesis; L-ornithine and N-acetyl-L-glutamate from L-glutamate and N(2)-acetyl-L-ornithine (cyclic): step 1/1. It functions in the pathway amino-acid biosynthesis; L-arginine biosynthesis; N(2)-acetyl-L-ornithine from L-glutamate: step 1/4. In terms of biological role, catalyzes two activities which are involved in the cyclic version of arginine biosynthesis: the synthesis of N-acetylglutamate from glutamate and acetyl-CoA as the acetyl donor, and of ornithine by transacetylation between N(2)-acetylornithine and glutamate. This Shouchella clausii (strain KSM-K16) (Alkalihalobacillus clausii) protein is Arginine biosynthesis bifunctional protein ArgJ.